Consider the following 285-residue polypeptide: Probable endonuclease 4 (285 aa).

Zn(2+) is bound by residues His-69, His-109, Glu-145, Asp-179, His-182, His-216, Asp-229, His-231, and Glu-261.

Belongs to the AP endonuclease 2 family. The cofactor is Zn(2+).

It carries out the reaction Endonucleolytic cleavage to 5'-phosphooligonucleotide end-products.. Endonuclease IV plays a role in DNA repair. It cleaves phosphodiester bonds at apurinic or apyrimidinic (AP) sites, generating a 3'-hydroxyl group and a 5'-terminal sugar phosphate. The polypeptide is Probable endonuclease 4 (Salmonella agona (strain SL483)).